Consider the following 108-residue polypeptide: ATP synthase epsilon chain (108 aa).

It belongs to the ATPase epsilon chain family. In terms of assembly, F-type ATPases have 2 components, CF(1) - the catalytic core - and CF(0) - the membrane proton channel. CF(1) has five subunits: alpha(3), beta(3), gamma(1), delta(1), epsilon(1). CF(0) has three main subunits: a, b and c.

Its subcellular location is the cell inner membrane. Produces ATP from ADP in the presence of a proton gradient across the membrane. The protein is ATP synthase epsilon chain of Rickettsia bellii (strain OSU 85-389).